The following is a 147-amino-acid chain: Secreted RxLR effector protein BLN04 (147 aa).

An N-terminal signal peptide occupies residues 1–23 (MATMRRICFLFVFNLAVATSTQG). Positions 58 to 61 (SEER) match the dEER motif. A helical transmembrane segment spans residues 117–137 (VYIYTILFLSIPIILGVAMYI).

Belongs to the RxLR effector family. Interacts with host transcription factor NAC069.

It localises to the secreted. The protein resides in the host membrane. Its function is as follows. Secreted effector that inhibits stress-induced relocalization of the transcription factor NAC069 to the nucleus, thus affecting its broad role in abiotic and biotic stress responses. The protein is Secreted RxLR effector protein BLN04 of Bremia lactucae (Lettuce downy mildew).